Here is a 370-residue protein sequence, read N- to C-terminus: A-type ATP synthase subunit C (370 aa).

This sequence belongs to the V-ATPase V0D/AC39 subunit family. As to quaternary structure, has multiple subunits with at least A(3), B(3), C, D, E, F, H, I and proteolipid K(x).

It is found in the cell membrane. Functionally, component of the A-type ATP synthase that produces ATP from ADP in the presence of a proton gradient across the membrane. This chain is A-type ATP synthase subunit C, found in Pyrococcus abyssi (strain GE5 / Orsay).